The chain runs to 152 residues: MLP-like protein 165 (152 aa).

This sequence belongs to the MLP family.

This Arabidopsis thaliana (Mouse-ear cress) protein is MLP-like protein 165 (MLP165).